Consider the following 432-residue polypeptide: Benzoyl-CoA reductase subunit B (432 aa).

This sequence belongs to the FldB/FldC dehydratase alpha/beta subunit family. As to quaternary structure, heterotetramer composed of A, B, C, and D subunits. Iron-sulfur cluster serves as cofactor. An oxidized flavin is required as a cofactor.

It catalyses the reaction cyclohexa-1,5-diene-1-carbonyl-CoA + oxidized 2[4Fe-4S]-[ferredoxin] + 2 ADP + 2 phosphate = reduced 2[4Fe-4S]-[ferredoxin] + benzoyl-CoA + 2 ATP + 2 H2O. The enzyme catalyses 3-hydroxybenzoyl-CoA + AH2 + 2 ATP + 2 H2O = 3-hydroxycyclohexa-1,5-diene-1-carbonyl-CoA + A + 2 ADP + 2 phosphate + 2 H(+). Catalyzes the anaerobic reduction of benzoyl-CoA and 3-hydroxybenzoyl-CoA to form cyclohexa-1,5-diene-1-carbonyl-CoA and 3-hydroxycyclohexa-1,5-diene-1-carbonyl-CoA, respectively. The enzyme also reduces other benzoyl-CoA analogs with small substituents at the aromatic ring. The sequence is that of Benzoyl-CoA reductase subunit B (bcrB) from Thauera aromatica.